The sequence spans 185 residues: Anaphase-promoting complex subunit 10 (185 aa).

The residue at position 2 (Thr-2) is an N-acetylthreonine. A DOC domain is found at 2 to 185 (TTPNKTPPGA…IDFMMYRSIR (184 aa)). Lys-169 is subject to N6-acetyllysine.

Belongs to the APC10 family. As to quaternary structure, the mammalian APC/C is composed at least of 14 distinct subunits ANAPC1, ANAPC2, CDC27/APC3, ANAPC4, ANAPC5, CDC16/APC6, ANAPC7, CDC23/APC8, ANAPC10, ANAPC11, CDC26/APC12, ANAPC13, ANAPC15 and ANAPC16 that assemble into a complex of at least 19 chains with a combined molecular mass of around 1.2 MDa; APC/C interacts with FZR1 and FBXO5. The C-terminus of APC10 binds to CDC27/APC3. Interacts with PIWIL1; interaction only takes place when PIWIL1 binds piRNA. Interacts with FBXO43; the interaction is direct.

Its pathway is protein modification; protein ubiquitination. Functionally, component of the anaphase promoting complex/cyclosome (APC/C), a cell cycle-regulated E3 ubiquitin ligase that controls progression through mitosis and the G1 phase of the cell cycle. The APC/C complex acts by mediating ubiquitination and subsequent degradation of target proteins: it mainly mediates the formation of 'Lys-11'-linked polyubiquitin chains and, to a lower extent, the formation of 'Lys-48'- and 'Lys-63'-linked polyubiquitin chains. The APC/C complex catalyzes assembly of branched 'Lys-11'-/'Lys-48'-linked branched ubiquitin chains on target proteins. The polypeptide is Anaphase-promoting complex subunit 10 (Anapc10) (Mus musculus (Mouse)).